The sequence spans 86 residues: Anti-adapter protein IraP (86 aa).

Residues 1–36 are a coiled coil; it reads MKNLIAELLLKLAQKEEESKELCAQVEALEIIVTAM.

Belongs to the IraP family. Interacts with RssB.

It localises to the cytoplasm. Inhibits RpoS proteolysis by regulating RssB activity, thereby increasing the stability of the sigma stress factor RpoS especially during phosphate starvation, but also in stationary phase and during nitrogen starvation. Its effect on RpoS stability is due to its interaction with RssB, which probably blocks the interaction of RssB with RpoS, and the consequent delivery of the RssB-RpoS complex to the ClpXP protein degradation pathway. The polypeptide is Anti-adapter protein IraP (Shigella boydii serotype 18 (strain CDC 3083-94 / BS512)).